A 142-amino-acid polypeptide reads, in one-letter code: Putative pre-16S rRNA nuclease (142 aa).

Belongs to the YqgF nuclease family.

The protein localises to the cytoplasm. Its function is as follows. Could be a nuclease involved in processing of the 5'-end of pre-16S rRNA. In Staphylococcus haemolyticus (strain JCSC1435), this protein is Putative pre-16S rRNA nuclease.